We begin with the raw amino-acid sequence, 344 residues long: Mitochondrial substrate carrier family protein D (344 aa).

Residues 1–22 lie on the Mitochondrial intermembrane side of the membrane; that stretch reads MDSTKTNNKWAAAGILNSVGKD. Solcar repeat units follow at residues 17 to 104, 119 to 212, and 239 to 327; these read NSVG…CQSY, IPYH…MKRK, and VPAW…TRNL. A helical transmembrane segment spans residues 23–43; it reads FVAGSVGGMSSIMAGHPFDTI. Topologically, residues 44–75 are mitochondrial matrix; it reads KVMLQDASGNLPKFKNGFQALKYIMKVDGIKG. A helical transmembrane segment spans residues 76–96; it reads IYRGLSVPLFSVSFTNSVFFA. The Mitochondrial intermembrane portion of the chain corresponds to 97-116; it reads TNNFCQSYFHPPCKDENGED. A helical membrane pass occupies residues 117–137; the sequence is ILIPYHKAAAAGAIAGGVISL. Over 138 to 186 the chain is Mitochondrial matrix; sequence LITPRDLVKSKLQVQCRPFGSTNVSLQYKGPIDVIRQTIKRDGIKGMFK. Residues 187–207 form a helical membrane-spanning segment; that stretch reads GIRSTFCRDIPGDAVYFVVYE. Topologically, residues 208–238 are mitochondrial intermembrane; it reads FMKRKLLALSKNNNNNNNNNDNNDNSSPKAG. The chain crosses the membrane as a helical span at residues 239–259; that stretch reads VPAWVAIGAGGCAGMSFWMSI. Residues 260-301 lie on the Mitochondrial matrix side of the membrane; it reads YPMDVVKTRIQTQPDHLPPQYTSVLQTITKIYREEGISVFFR. Residues 302 to 321 form a helical membrane-spanning segment; it reads GFSATILRAFPTSAVNFLMY. At 322-344 the chain is on the mitochondrial intermembrane side; sequence ETTRNLLNSKDPFYNNNDHYNAE.

Belongs to the mitochondrial carrier (TC 2.A.29) family.

The protein localises to the mitochondrion inner membrane. Functionally, calcium-dependent mitochondrial solute carrier. Mitochondrial solute carriers shuttle metabolites, nucleotides, and cofactors through the mitochondrial inner membrane. The chain is Mitochondrial substrate carrier family protein D (mcfD) from Dictyostelium discoideum (Social amoeba).